The sequence spans 987 residues: UPF0182 protein Lxx09300 (987 aa).

Transmembrane regions (helical) follow at residues 17 to 37 (VWTT…FAGL), 59 to 79 (AAIA…WVVI), 108 to 128 (RLAM…SAAS), 167 to 187 (VGFA…TCYL), 206 to 226 (VQIS…VWLD), 256 to 276 (AVLA…AFTG), and 283 to 303 (VGTA…PWAI). 2 disordered regions span residues 700–719 (RDDA…DPTL) and 886–947 (TAGD…ALQQ). Residues 705–719 (TTPNDPTSSPTDPTL) show a composition bias toward low complexity. Residues 897-932 (GGSGGGSSGDAGSSAGGGSSGGGGSSAGGSSSGSGS) show a composition bias toward gly residues. Positions 933–947 (SGTQSNAALQRALQQ) are enriched in low complexity.

This sequence belongs to the UPF0182 family.

It localises to the cell membrane. This chain is UPF0182 protein Lxx09300, found in Leifsonia xyli subsp. xyli (strain CTCB07).